Reading from the N-terminus, the 133-residue chain is MESWALTTPPIDIVNQYLFFIKRKTNYMATYYYALASQKFLLEEEPFEEVLKERRRDYGEKNKEIDFWQVIQPAFLNAPELAEAKAKAPEKNVAIVSTNKSFIVWVKLRLEYVLTGEFEAPSDAIPDPLASLD.

Belongs to the ycf54 family.

The chain is Ycf54-like protein from Synechocystis sp. (strain ATCC 27184 / PCC 6803 / Kazusa).